Consider the following 93-residue polypeptide: Em protein H5 (93 aa).

A disordered region spans residues 1–93; the sequence is MASGQQERSE…IDESKFKTKS (93 aa). Composition is skewed to basic and acidic residues over residues 7-19, 32-62, and 73-93; these read ERSE…REGE, EAQE…EMGR, and GGER…KTKS.

Belongs to the small hydrophilic plant seed protein family.

Functionally, it is thought to provide protection for the cytoplasm during the desiccation stage of embryo development. The sequence is that of Em protein H5 (EMH5) from Triticum aestivum (Wheat).